Consider the following 596-residue polypeptide: Nitrite reductase (596 aa).

The signal sequence occupies residues 1–29; it reads MRQRTPFARPGLLASAALALVLGPLAVAA. Residues 30-76 are N-terminal tail; sequence QEQAAPPKDPAAALEDHKTKTDNRYEPSLDNLAQQDVAALGAPEGIP. His-46 contacts heme c. Residues Tyr-54 and Ser-57 each coordinate heme d1. Residues 77 to 162 form the Cytochrome c domain; it reads ALSDAQYNEA…ANYLLLDPAA (86 aa). Residues Cys-94, Cys-97, His-98, Lys-108, and Tyr-122 each coordinate heme c. Residues Trp-138, Arg-203, His-229, Arg-232, Arg-245, Arg-272, Tyr-292, Arg-420, Gln-536, and Thr-583 each contribute to the heme d1 site. Residues 163–596 are D1-heme domain; it reads PPEFGMKEMR…NVYNTMTDTY (434 aa).

As to quaternary structure, homodimer. Heme c is required as a cofactor. Requires heme as cofactor.

It is found in the periplasm. The enzyme catalyses nitric oxide + Fe(III)-[cytochrome c] + H2O = Fe(II)-[cytochrome c] + nitrite + 2 H(+). It catalyses the reaction A + NH4(+) + H2O = hydroxylamine + AH2 + H(+). Inactivation of this cytochrome oxidase results in the loss of nitrite and nitric oxide reductase activities, but not of nitrous oxide reductase activity. This chain is Nitrite reductase (nirS), found in Paracoccus denitrificans (strain Pd 1222).